The chain runs to 693 residues: MDILKLLSRGTKKTQKGSQNAFNPQQKLPSAGTSTNPQLYHDQVRGHKRKRTKNESEPEAKVDLPEVDFFAPKPEPVAEAPVEVDEPVQAPKPTRSSRLLSEDECRQLLRSHRLKITLLSKTEDQSKVKKSKKKKKAAVEVKKDSKKQLFPQPLDSFGELRNAYGLSDKVADNLVFQGYRVPTEVQMGSLPLLVHPQAALKDEDGLDGGVDFLAIAPTGSGKTISFLIPAINNILRRRSEENTGNIHELEAVIVAPTRELVHQIVSEGQKLCKGTGLKVVSMKKHTHLSADQVDMAEDSSEDEEDKESESEDDDKKPSDDKPKQITTPDILVTTPFLLFKFLTSGPPSTQKVLPTVRDLILDEADVLLDPLFRDATMADWTACTNTNLRVSFWSATMGSNIESMVTEKLTSRAQSLDITPKPFVRLVVGLKDTAVPNIAHKLIYTASEQGKLLALRQLLHPTASDDSGPPLRPPFLVFTQTIDRATALHEELQYDIPLEAGGAARIAALHSGLTDSARSSIMRKFRAGDIWILITTDVLARGVDFAGVNGVVNYDVPGSSAGYVHRAGRTGRAGREGGIAVTFYTKEDIPFVKMVANVIAVSEKQAGKTGDEAGVQKWLLDALPNVRKADRKKLKERGNEARRSGVKSKISSKSGYERRRENNRLGAIEGSKKRKLQANDDSGDDGEWGGIDD.

The tract at residues methionine 1–serine 101 is disordered. The span at lysine 16–glutamine 38 shows a compositional bias: polar residues. A compositionally biased stretch (basic and acidic residues) spans lysine 53–leucine 64. Residues valine 77–proline 91 show a composition bias toward low complexity. Residues glutamate 159–methionine 187 carry the Q motif motif. The 213-residue stretch at glutamate 203–serine 415 folds into the Helicase ATP-binding domain. Alanine 216–threonine 223 contacts ATP. Residues leucine 288–threonine 326 form a disordered region. The segment covering aspartate 294–aspartate 312 has biased composition (acidic residues). The span at aspartate 313–lysine 323 shows a compositional bias: basic and acidic residues. A DEAD box motif is present at residues aspartate 362–aspartate 365. Residues alanine 454–leucine 623 enclose the Helicase C-terminal domain. Residues arginine 631–aspartate 693 are disordered. The span at aspartate 681–aspartate 693 shows a compositional bias: acidic residues.

The protein belongs to the DEAD box helicase family. DDX52/ROK1 subfamily. Interacts with the U3 snoRNA and is associated with the 90S and 40S pre-ribosomes.

The protein localises to the nucleus. It localises to the nucleolus. It carries out the reaction ATP + H2O = ADP + phosphate + H(+). ATP-dependent RNA helicase involved in 40S ribosomal subunit biogenesis. Required for the processing and cleavage of 35S pre-rRNA at sites A0, A1, and A2, leading to mature 18S rRNA. The protein is ATP-dependent RNA helicase ROK1 (ROK1) of Gibberella zeae (strain ATCC MYA-4620 / CBS 123657 / FGSC 9075 / NRRL 31084 / PH-1) (Wheat head blight fungus).